Here is a 216-residue protein sequence, read N- to C-terminus: Pyridoxine/pyridoxamine 5'-phosphate oxidase (216 aa).

Substrate-binding positions include 12-15 and Lys-70; that span reads RKSY. FMN-binding positions include 65 to 70, 80 to 81, Arg-86, and Lys-87; these read RVVLVK and FT. Positions 127, 131, and 135 each coordinate substrate. Residues 144-145 and Trp-188 contribute to the FMN site; that span reads QS. 194–196 is a substrate binding site; sequence RLH. Arg-198 lines the FMN pocket.

It belongs to the pyridoxamine 5'-phosphate oxidase family. In terms of assembly, homodimer. FMN serves as cofactor.

It catalyses the reaction pyridoxamine 5'-phosphate + O2 + H2O = pyridoxal 5'-phosphate + H2O2 + NH4(+). It carries out the reaction pyridoxine 5'-phosphate + O2 = pyridoxal 5'-phosphate + H2O2. Its pathway is cofactor metabolism; pyridoxal 5'-phosphate salvage; pyridoxal 5'-phosphate from pyridoxamine 5'-phosphate: step 1/1. It participates in cofactor metabolism; pyridoxal 5'-phosphate salvage; pyridoxal 5'-phosphate from pyridoxine 5'-phosphate: step 1/1. Catalyzes the oxidation of either pyridoxine 5'-phosphate (PNP) or pyridoxamine 5'-phosphate (PMP) into pyridoxal 5'-phosphate (PLP). The sequence is that of Pyridoxine/pyridoxamine 5'-phosphate oxidase from Polaromonas sp. (strain JS666 / ATCC BAA-500).